The following is a 145-amino-acid chain: 3-hydroxyacyl-[acyl-carrier-protein] dehydratase FabZ (145 aa).

His-47 is a catalytic residue.

This sequence belongs to the thioester dehydratase family. FabZ subfamily.

It is found in the cytoplasm. The catalysed reaction is a (3R)-hydroxyacyl-[ACP] = a (2E)-enoyl-[ACP] + H2O. Functionally, involved in unsaturated fatty acids biosynthesis. Catalyzes the dehydration of short chain beta-hydroxyacyl-ACPs and long chain saturated and unsaturated beta-hydroxyacyl-ACPs. The polypeptide is 3-hydroxyacyl-[acyl-carrier-protein] dehydratase FabZ (Geotalea uraniireducens (strain Rf4) (Geobacter uraniireducens)).